The following is a 327-amino-acid chain: Flap endonuclease 1 (327 aa).

Positions 1–98 (MGVKLKDIIQ…ETIDQRRQTR (98 aa)) are N-domain. Residues Asp-27, Asp-80, Glu-152, Glu-154, Asp-173, Asp-175, and Asp-226 each coordinate Mg(2+). The interval 116–246 (EARKYAMRSS…KTALKLAKKG (131 aa)) is I-domain. An interaction with PCNA region spans residues 319–327 (SQKSLEDWF).

It belongs to the XPG/RAD2 endonuclease family. FEN1 subfamily. Interacts with PCNA. PCNA stimulates the nuclease activity without altering cleavage specificity. Requires Mg(2+) as cofactor.

Structure-specific nuclease with 5'-flap endonuclease and 5'-3' exonuclease activities involved in DNA replication and repair. During DNA replication, cleaves the 5'-overhanging flap structure that is generated by displacement synthesis when DNA polymerase encounters the 5'-end of a downstream Okazaki fragment. Binds the unpaired 3'-DNA end and kinks the DNA to facilitate 5' cleavage specificity. Cleaves one nucleotide into the double-stranded DNA from the junction in flap DNA, leaving a nick for ligation. Also involved in the base excision repair (BER) pathway. Acts as a genome stabilization factor that prevents flaps from equilibrating into structures that lead to duplications and deletions. Also possesses 5'-3' exonuclease activity on nicked or gapped double-stranded DNA. This is Flap endonuclease 1 from Methanobrevibacter smithii (strain ATCC 35061 / DSM 861 / OCM 144 / PS).